The primary structure comprises 141 residues: Large ribosomal subunit protein uL11 (141 aa).

This sequence belongs to the universal ribosomal protein uL11 family. In terms of assembly, part of the ribosomal stalk of the 50S ribosomal subunit. Interacts with L10 and the large rRNA to form the base of the stalk. L10 forms an elongated spine to which L12 dimers bind in a sequential fashion forming a multimeric L10(L12)X complex. One or more lysine residues are methylated.

Functionally, forms part of the ribosomal stalk which helps the ribosome interact with GTP-bound translation factors. In Streptococcus equi subsp. equi (strain 4047), this protein is Large ribosomal subunit protein uL11.